The chain runs to 179 residues: Large ribosomal subunit protein uL5 (179 aa).

This sequence belongs to the universal ribosomal protein uL5 family. Part of the 50S ribosomal subunit; part of the 5S rRNA/L5/L18/L25 subcomplex. Contacts the 5S rRNA and the P site tRNA. Forms a bridge to the 30S subunit in the 70S ribosome.

In terms of biological role, this is one of the proteins that bind and probably mediate the attachment of the 5S RNA into the large ribosomal subunit, where it forms part of the central protuberance. In the 70S ribosome it contacts protein S13 of the 30S subunit (bridge B1b), connecting the 2 subunits; this bridge is implicated in subunit movement. Contacts the P site tRNA; the 5S rRNA and some of its associated proteins might help stabilize positioning of ribosome-bound tRNAs. The chain is Large ribosomal subunit protein uL5 from Burkholderia mallei (strain NCTC 10247).